The primary structure comprises 85 residues: Probable Sec-independent protein translocase protein TatE (85 aa).

The chain crosses the membrane as a helical span at residues 1 to 21 (MEGLSITKLLVVGILIVLLFG). The disordered stretch occupies residues 64–85 (KTVAETKAASDSQAAASVERKD).

Belongs to the TatA/E family. TatE subfamily.

It is found in the cell inner membrane. Its function is as follows. Part of the twin-arginine translocation (Tat) system that transports large folded proteins containing a characteristic twin-arginine motif in their signal peptide across membranes. TatE shares overlapping functions with TatA. The sequence is that of Probable Sec-independent protein translocase protein TatE from Yersinia pestis.